Consider the following 230-residue polypeptide: uncharacterized protein (230 aa).

Residues 1–18 form the signal peptide; it reads MRQYTSKSILFMTAIALS.

This is an uncharacterized protein from Pasteurella multocida (strain Pm70).